Consider the following 460-residue polypeptide: ATP synthase subunit beta (460 aa).

150-157 (GGAGVGKT) is a binding site for ATP.

This sequence belongs to the ATPase alpha/beta chains family. F-type ATPases have 2 components, CF(1) - the catalytic core - and CF(0) - the membrane proton channel. CF(1) has five subunits: alpha(3), beta(3), gamma(1), delta(1), epsilon(1). CF(0) has three main subunits: a(1), b(2) and c(9-12). The alpha and beta chains form an alternating ring which encloses part of the gamma chain. CF(1) is attached to CF(0) by a central stalk formed by the gamma and epsilon chains, while a peripheral stalk is formed by the delta and b chains.

The protein localises to the cell inner membrane. It carries out the reaction ATP + H2O + 4 H(+)(in) = ADP + phosphate + 5 H(+)(out). Produces ATP from ADP in the presence of a proton gradient across the membrane. The catalytic sites are hosted primarily by the beta subunits. The sequence is that of ATP synthase subunit beta from Citrobacter koseri (strain ATCC BAA-895 / CDC 4225-83 / SGSC4696).